Here is an 846-residue protein sequence, read N- to C-terminus: MAEITVGQLAQQTNKEVDALLKQLKSFGIEKSSEKDTLTPTEMKTLLEKINSAKNTATRKKVTSVKLDGKHKINVSVKRKRRVAKKVEQQESTTLEQPQELETMVQEVSQQVDIVKEQDNIEQIVENKEAVKVQEQRQAEIAKPVIKDSGFKITAMPEIKIEEIVAEDDEGLAASDKQAKKKAAKKVFSEAVNTNTKYKREEEEKKSKAKKAGGKGFKKANPRQLSQLAGDLESFDEFGAKKGKLKAPKVKKQEFTKPVENTVRTVEIHEGITVSELAQKMAVKGAEIVKVLFNMGVMATINQSLDQDTAILIVEEMGHKYTLHNENALEEAVTIVDRSSYKKISRAPVVTIMGHVDHGKTSLLDYIRQTRVVAGEAGGITQHIGAYSVKTDKGSITFLDTPGHEAFTSMRARGAKSTDIVILVVAADDGVMPQTEEAIQHAKAARVPIVVAVNKIDKPEADPDKVISELAQRNVIPESWGGDVMFVNVSAKTGEGVADLLEAVLLQSEVLELEAFAEGLAEGVVIESRLEKGRGPVATVLVQNGNLKQGDNILCGTEYGRVRAMHNDLGKKIKAAGPATPVEILGLSGMPAAGDEMVVIENEKKAKELAAQRSQKQKEAKIAQEQSLKLSNMFNNMGKEGEQQVLKIILKGDVQGSVEAIRESLLKLSTDEVKVDIIASGIGAITSSDVTLAVASTAVVIGFNVRADSAAKKLAETDGVEFRYYNIIYDLIDDVKKAMSGLLSPEMKEQIIGIAEVREVYRSSKFGSIAGCMVIEGVVKRTNPIRVLRNNVVIYEGTLESLKRFKDDASEVKKGLECGIGVKNYNDVREGDQIEVFEVIEVAKEL.

The segment at 198–219 is disordered; it reads YKREEEEKKSKAKKAGGKGFKK. Basic residues predominate over residues 207–219; the sequence is SKAKKAGGKGFKK. Positions 345–512 constitute a tr-type G domain; it reads SRAPVVTIMG…AVLLQSEVLE (168 aa). The segment at 354–361 is G1; it reads GHVDHGKT. 354-361 contributes to the GTP binding site; that stretch reads GHVDHGKT. Positions 379 to 383 are G2; that stretch reads GITQH. Residues 400 to 403 are G3; it reads DTPG. Residues 400–404 and 454–457 contribute to the GTP site; these read DTPGH and NKID. The segment at 454-457 is G4; the sequence is NKID. Residues 490–492 form a G5 region; sequence SAK.

This sequence belongs to the TRAFAC class translation factor GTPase superfamily. Classic translation factor GTPase family. IF-2 subfamily.

The protein resides in the cytoplasm. One of the essential components for the initiation of protein synthesis. Protects formylmethionyl-tRNA from spontaneous hydrolysis and promotes its binding to the 30S ribosomal subunits. Also involved in the hydrolysis of GTP during the formation of the 70S ribosomal complex. This is Translation initiation factor IF-2 from Francisella tularensis subsp. tularensis (strain SCHU S4 / Schu 4).